A 511-amino-acid polypeptide reads, in one-letter code: 2,3-bisphosphoglycerate-independent phosphoglycerate mutase (511 aa).

Mn(2+) is bound at residue D12. Y36 is subject to Phosphotyrosine. S62 serves as a coordination point for Mn(2+). Catalysis depends on S62, which acts as the Phosphoserine intermediate. Residues H123, 153-154 (RD), R185, R191, 261-264 (RPDR), and K336 each bind substrate. Residues D403, H407, D444, H445, and H462 each contribute to the Mn(2+) site.

This sequence belongs to the BPG-independent phosphoglycerate mutase family. As to quaternary structure, monomer. Mn(2+) is required as a cofactor.

The enzyme catalyses (2R)-2-phosphoglycerate = (2R)-3-phosphoglycerate. It participates in carbohydrate degradation; glycolysis; pyruvate from D-glyceraldehyde 3-phosphate: step 3/5. In terms of biological role, essential for rapid growth and for sporulation. Catalyzes the interconversion of 2-phosphoglycerate and 3-phosphoglycerate. This chain is 2,3-bisphosphoglycerate-independent phosphoglycerate mutase, found in Bacillus pumilus (strain SAFR-032).